We begin with the raw amino-acid sequence, 144 residues long: Oxoglutarate dehydrogenase inhibitor (144 aa).

Position 14 is a phosphothreonine (threonine 14). The 50-residue stretch at 68–117 (TAAGRHPDSDIFLDDVTVSRRHAEFRRNGDQYEVVDVGSLNGTYVNREPK) folds into the FHA domain.

It localises to the cytoplasm. Its function is as follows. An essential component of the PknG signaling pathway. When unphosphorylated, it inhibits the activity of 2-oxoglutarate dehydrogenase. When phosphorylated it does not inhibit 2-oxoglutarate dehydrogenase. This chain is Oxoglutarate dehydrogenase inhibitor (odhI), found in Corynebacterium jeikeium (strain K411).